Reading from the N-terminus, the 198-residue chain is Na(+)-translocating NADH-quinone reductase subunit E (198 aa).

Helical transmembrane passes span 11–31, 35–55, 77–97, 110–130, 140–160, and 176–196; these read AVFI…FLAV, VSTA…AVPV, FLNF…LEMV, GIFL…SFMV, IVYG…LAGL, and LGIT…FSGI.

Belongs to the NqrDE/RnfAE family. As to quaternary structure, composed of six subunits; NqrA, NqrB, NqrC, NqrD, NqrE and NqrF.

The protein localises to the cell inner membrane. It carries out the reaction a ubiquinone + n Na(+)(in) + NADH + H(+) = a ubiquinol + n Na(+)(out) + NAD(+). NQR complex catalyzes the reduction of ubiquinone-1 to ubiquinol by two successive reactions, coupled with the transport of Na(+) ions from the cytoplasm to the periplasm. NqrA to NqrE are probably involved in the second step, the conversion of ubisemiquinone to ubiquinol. The sequence is that of Na(+)-translocating NADH-quinone reductase subunit E from Haemophilus influenzae (strain 86-028NP).